Reading from the N-terminus, the 508-residue chain is Erythropoietin receptor (508 aa).

Positions 1–24 (MDHLGASLWPQVGSLCLLLAGAAW) are cleaved as a signal peptide. The Extracellular segment spans residues 25–250 (APPPNLPDPK…SLLTPSDLDP (226 aa)). Cysteines 52 and 62 form a disulfide. Asn-76 carries an N-linked (GlcNAc...) asparagine glycan. Cys-91 and Cys-107 are oxidised to a cystine. The Fibronectin type-III domain maps to 147 to 247 (APVGLVARLA…EPVSLLTPSD (101 aa)). A WSXWS motif motif is present at residues 233–237 (WSAWS). A helical membrane pass occupies residues 251-273 (LILTLSLILVVILVLLTVLALLS). Residues 274 to 508 (HRRALKQKIW…PLPPSYVACS (235 aa)) are Cytoplasmic-facing. Lys-281 is covalently cross-linked (Glycyl lysine isopeptide (Lys-Gly) (interchain with G-Cter in ubiquitin)). Residues 282-290 (IWPGIPSPE) carry the Box 1 motif motif. Tyr-368 and Tyr-426 each carry phosphotyrosine; by JAK2. Positions 452-457 (LKYLYL) match the ITIM motif motif. Residue Lys-453 forms a Glycyl lysine isopeptide (Lys-Gly) (interchain with G-Cter in ubiquitin) linkage. Phosphotyrosine; by JAK2 occurs at positions 454, 456, 468, 485, 489, and 504. The interval 454–456 (YLY) is required for high-affinity SOCS3 binding. Residues 467–494 (DYSSGDSQGAQGGLSDGPYSNPYENSLI) form a disordered region.

This sequence belongs to the type I cytokine receptor family. Type 1 subfamily. As to quaternary structure, forms homodimers on EPO stimulation. The tyrosine-phosphorylated form interacts with several SH2 domain-containing proteins including LYN, the adapter protein SH2B2, PTPN6, PTPN11, JAK2, PI3 kinases, STAT5A/B, SOCS3, CRKL. Interacts with INPP5D/SHIP1. SH2B2 binding inhibits the JAK-STAT signaling. Interacts with RHEX; this interaction occurs in a erythropoietin (EPO)-dependent manner. Interacts with ATXN2L. Post-translationally, on EPO stimulation, phosphorylated on C-terminal tyrosine residues by JAK2. The phosphotyrosine motifs are also recruitment sites for several SH2-containing proteins and adapter proteins which mediate cell proliferation. Phosphorylation on Tyr-454 is required for PTPN6 interaction, Tyr-426 for PTPN11. Tyr-426 is also required for SOCS3 binding, but Tyr-454/Tyr-456 motif is the preferred binding site. Ubiquitinated by the ECS(SOCS2) complex following ligand-binding and phosphorylation by JAK2, leading to its degradation by the proteasome. Regulation by the ECS(SOCS2) complex acts as a negative feedback loop of erythropoietin-mediated signaling pathway. Ubiquitination at Lys-281 mediates receptor internalization, whereas ubiquitination at Lys-453 promotes trafficking of activated receptors to the lysosomes for degradation. Ubiquitinated by NOSIP; appears to be either multi-monoubiquitinated or polyubiquitinated. Ubiquitination mediates proliferation and survival of EPO-dependent cells. As to expression, erythroid cells and erythroid progenitor cells. In terms of tissue distribution, isoform EPOR-F is the most abundant form in EPO-dependent erythroleukemia cells and in late-stage erythroid progenitors. Isoform EPOR-S and isoform EPOR-T are the predominant forms in bone marrow. As to expression, isoform EPOR-S and isoform EPOR-T are the predominant forms in bone marrow. Isoform EPOR-T is the most abundant from in early-stage erythroid progenitor cells.

The protein localises to the cell membrane. It localises to the secreted. Its function is as follows. Receptor for erythropoietin, which mediates erythropoietin-induced erythroblast proliferation and differentiation. Upon EPO stimulation, EPOR dimerizes triggering the JAK2/STAT5 signaling cascade. In some cell types, can also activate STAT1 and STAT3. May also activate the LYN tyrosine kinase. Acts as a dominant-negative receptor of EPOR-mediated signaling. In Homo sapiens (Human), this protein is Erythropoietin receptor.